The sequence spans 643 residues: E3 ubiquitin-protein ligase AMFR (643 aa).

The tract at residues 39-67 (PEAGPGEPDQLTASLQPEPPAPARPSAGG) is disordered. 6 helical membrane-spanning segments follow: residues 82–102 (LFVW…AKLI), 122–142 (FWNF…VQTV), 145–165 (VVMW…VQLC), 186–206 (VLSL…VCSI), 215–235 (TLAF…HVIL), and 276–296 (HIHM…VIFM). An RING-type zinc finger spans residues 341–379 (CAICWDSMQAARKLPCGHLFHNSCLRSWLEQDTSCPTCR). The helical transmembrane segment at 429–449 (IASWLPSFSVEVMHTTNILGI) threads the bilayer. The CUE domain occupies 456 to 498 (QLNAMAHQIQEMFPQVPYHLVLQDLQLTRSVEITTDNILEGRI). 2 disordered regions span residues 504 to 579 (TQRS…DERQ) and 596 to 624 (RFLN…PVTL). Phosphoserine occurs at positions 516, 523, and 542. The span at 548–563 (TLDFGEVEVEPSEVED) shows a compositional bias: acidic residues. A compositionally biased stretch (basic and acidic residues) spans 564–579 (FEARGSRFSKSADERQ). Positions 622 to 640 (VTLRRRMLAAAAERRLQKQ) are VCP/p97-interacting motif (VIM).

In terms of assembly, interacts with RNF5. Also forms an ERAD complex containing VCP/p97, NGLY1; PSMC1; SAKS1 and RAD23B required for coupling retrotranslocation, ubiquitination and deglycosylation. Interacts with DERL1. Interacts (through a region distinct from the RING finger) with UBE2G2/UBC7. Component of the VCP/p97-AMFR/gp78 complex that enhances VCP/p97 binding to polyubiquitinated proteins for their degradation by the endoplasmic reticulum-associated degradation (ERAD) pathway. Interacts (via the VIM) with VCP/p97. Interacts (via its membrane domain) with INSIG1; the interaction initiates the sterol-mediated ubiquitination and degradation of HMGCR by the ERAD pathway. Interacts with AUP1, UBE2G2 and RNF139/TRC8; interaction with AUP1 facilitates interaction of AMFR with ubiquitin-conjugating enzyme UBE2G2 and ubiquitin ligase RNF139, leading to sterol-induced ubiquitination of HMGCR and its subsequent proteasomal degradation. Interacts with BAG6. Interacts with USP13 (via UBA 2 domain); the interaction is direct. Interacts with LMBR1L. Interacts with UBAC2 and CTNNB1. Interacts with C18orf32. As to quaternary structure, (Microbial infection) Interacts with Staphylococcus aureus HIgB; this interaction regulates AMFR-mediated inflammation by promoting TAB3 ubiquitination to promote TAB3-TAK1 complex formation. Post-translationally, palmitoylation of the RING-type zing finger by ZDHHC6 promotes localization to the peripheral endoplasmic reticulum. Widely expressed.

Its subcellular location is the endoplasmic reticulum membrane. The enzyme catalyses [E2 ubiquitin-conjugating enzyme]-S-ubiquitinyl-L-cysteine + [acceptor protein]-L-cysteine = [E2 ubiquitin-conjugating enzyme]-L-cysteine + [acceptor protein]-S-ubiquitinyl-L-cysteine.. It participates in protein modification; protein ubiquitination. Functionally, E3 ubiquitin-protein ligase that mediates the polyubiquitination of lysine and cysteine residues on target proteins, such as CD3D, CYP3A4, CFTR, INSIG1, SOAT2/ACAT2 and APOB for proteasomal degradation. Component of a VCP/p97-AMFR/gp78 complex that participates in the final step of endoplasmic reticulum-associated degradation (ERAD). The VCP/p97-AMFR/gp78 complex is involved in the sterol-accelerated ERAD degradation of HMGCR through binding to the HMGCR-INSIG1 complex at the ER membrane. In addition, interaction of AMFR with AUP1 facilitates interaction of AMFR with ubiquitin-conjugating enzyme UBE2G2 and ubiquitin ligase RNF139, leading to sterol-induced HMGCR ubiquitination. The ubiquitinated HMGCR is then released from the ER into the cytosol for subsequent destruction. In addition to ubiquitination on lysine residues, catalyzes ubiquitination on cysteine residues: together with INSIG1, mediates polyubiquitination of SOAT2/ACAT2 at 'Cys-277', leading to its degradation when the lipid levels are low. Catalyzes ubiquitination and subsequent degradation of INSIG1 when cells are depleted of sterols. Mediates polyubiquitination of INSIG2 at 'Cys-215' in some tissues, leading to its degradation. Also regulates ERAD through the ubiquitination of UBL4A a component of the BAG6/BAT3 complex. Also acts as a scaffold protein to assemble a complex that couples ubiquitination, retranslocation and deglycosylation. Mediates tumor invasion and metastasis as a receptor for the GPI/autocrine motility factor. In association with LMBR1L and UBAC2, negatively regulates the canonical Wnt signaling pathway in the lymphocytes by promoting the ubiquitin-mediated degradation of CTNNB1 and Wnt receptors FZD6 and LRP6. Regulates NF-kappa-B and MAPK signaling pathways by mediating 'Lys-27'-linked polyubiquitination of TAB3 and promoting subsequent TAK1/MAP3K7 activation. Required for proper lipid homeostasis. The protein is E3 ubiquitin-protein ligase AMFR of Homo sapiens (Human).